The chain runs to 342 residues: Isopentenyl-diphosphate delta-isomerase (342 aa).

Position 11 to 12 (11 to 12) interacts with substrate; the sequence is RK. FMN is bound by residues S68, 69–71, S99, and N127; that span reads SMT. Residue 99–101 coordinates substrate; that stretch reads SMR. Position 163 (E163) interacts with Mg(2+). FMN-binding positions include K194, T224, and 295 to 296; that span reads AG.

This sequence belongs to the IPP isomerase type 2 family. Homooctamer. Dimer of tetramers. It depends on FMN as a cofactor. NADPH is required as a cofactor. The cofactor is Mg(2+).

The protein resides in the cytoplasm. The enzyme catalyses isopentenyl diphosphate = dimethylallyl diphosphate. In terms of biological role, involved in the biosynthesis of isoprenoids. Catalyzes the 1,3-allylic rearrangement of the homoallylic substrate isopentenyl (IPP) to its allylic isomer, dimethylallyl diphosphate (DMAPP). This Rickettsia prowazekii (strain Madrid E) protein is Isopentenyl-diphosphate delta-isomerase.